We begin with the raw amino-acid sequence, 479 residues long: Ammonium transporter 3 member 2 (479 aa).

A run of 11 helical transmembrane segments spans residues 34 to 54 (VAATVVGLQSVPGLVVLYGGV), 59 to 79 (WAVNSAFMALYAFAAVWICWV), 139 to 159 (VVYFQCVFAAITLILVAGSLL), 164 to 184 (FLAWMIFVPLWLTFSYTVGAF), 202 to 222 (GGYVIHVSAGIAGFTAAYWVG), 237 to 257 (ILFTLTGAGLLWMGWAGFNGG), 272 to 292 (NTNICTAMSLIVWTCLDVIFF), 297 to 317 (VVGAVQGMITGLVCITPAAGV), 321 to 341 (WAALVMGVLAGSIPWYTMMIL), 355 to 375 (LGVFHTHGVAGLLGGLLTGLF), and 407 to 427 (IAGGLFVVAWNVAVTSLICLA).

It belongs to the ammonia transporter channel (TC 1.A.11.2) family.

It localises to the membrane. Functionally, involved in ammonium transport. In Oryza sativa subsp. japonica (Rice), this protein is Ammonium transporter 3 member 2 (AMT3-2).